A 121-amino-acid chain; its full sequence is Phospholipase A2 homolog ECO_00035 (121 aa).

7 disulfide bridges follow: Cys25–Cys114, Cys27–Cys43, Cys42–Cys94, Cys48–Cys121, Cys49–Cys87, Cys56–Cys80, and Cys74–Cys85. The segment at 104-116 (KKYKIYPNILCRG) is important for membrane-damaging activities in eukaryotes and bacteria; heparin-binding.

It belongs to the phospholipase A2 family. Group II subfamily. S49 sub-subfamily. As to quaternary structure, monomer. In terms of tissue distribution, expressed by the venom gland.

Its subcellular location is the secreted. Snake venom phospholipase A2 homolog that lacks enzymatic activity. Shows high myotoxin activities and displays edema-inducing activities. Has cytotoxic activities against HUVEC cells (LC(50)=4.9 uL) and human lung adenocarcinoma A549 cells (LC(50)=3.5 uL). This is Phospholipase A2 homolog ECO_00035 from Echis coloratus (Carpet viper).